The primary structure comprises 550 residues: Methionine--tRNA ligase (550 aa).

Residues 13 to 23 (PYANGPLHFGH) carry the 'HIGH' region motif. Zn(2+)-binding residues include cysteine 145, cysteine 148, cysteine 158, and cysteine 161. A 'KMSKS' region motif is present at residues 331 to 335 (QFSKS). An ATP-binding site is contributed by lysine 334.

It belongs to the class-I aminoacyl-tRNA synthetase family. MetG type 1 subfamily. As to quaternary structure, monomer. Zn(2+) serves as cofactor.

The protein resides in the cytoplasm. The catalysed reaction is tRNA(Met) + L-methionine + ATP = L-methionyl-tRNA(Met) + AMP + diphosphate. Is required not only for elongation of protein synthesis but also for the initiation of all mRNA translation through initiator tRNA(fMet) aminoacylation. In Chlamydia trachomatis serovar D (strain ATCC VR-885 / DSM 19411 / UW-3/Cx), this protein is Methionine--tRNA ligase (metG).